Here is a 728-residue protein sequence, read N- to C-terminus: LPS-assembly protein LptD (728 aa).

Positions 1–21 (MSALPGFTLAALLLNVSLAEA) are cleaved as a signal peptide.

Belongs to the LptD family. In terms of assembly, component of the lipopolysaccharide transport and assembly complex. Interacts with LptE and LptA.

Its subcellular location is the cell outer membrane. In terms of biological role, together with LptE, is involved in the assembly of lipopolysaccharide (LPS) at the surface of the outer membrane. The polypeptide is LPS-assembly protein LptD (Thiobacillus denitrificans (strain ATCC 25259 / T1)).